The following is a 310-amino-acid chain: uncharacterized protein (310 aa).

Residues 1–11 show a composition bias toward basic residues; it reads MKVKSILKHSR. Disordered regions lie at residues 1 to 227 and 242 to 310; these read MKVK…SDHA and AMEE…NENE. The span at 12–50 shows a compositional bias: polar residues; that stretch reads MSSPSLETDSMESGQQQNMVSSTPSIDMNESDCSGTGTP. Residues 51–80 are compositionally biased toward basic and acidic residues; the sequence is SEERIRRLRWDEENLSKAEQQKSAKMKITE. Residues 91–105 show a composition bias toward acidic residues; sequence PDDEVPEINLDETDS. Over residues 110–121 the composition is skewed to low complexity; that stretch reads TAGTLGDTLGTL. Basic and acidic residues-rich tracts occupy residues 126-150 and 182-195; these read VSKD…KKEP and LPSK…ETKP. Acidic residues predominate over residues 242–253; sequence AMEEEALSEAEE. The segment covering 254–265 has biased composition (basic and acidic residues); that stretch reads NIPKKKPDFNEL. S285 is modified (phosphoserine). The span at 297-310 shows a compositional bias: polar residues; sequence DSGSASDVNMNENE.

This is an uncharacterized protein from Schizosaccharomyces pombe (strain 972 / ATCC 24843) (Fission yeast).